Consider the following 472-residue polypeptide: Levansucrase (472 aa).

The N-terminal stretch at 1–29 (MNIKKIVKQATVLTFTTALLAGGATQAFA) is a signal peptide. The sucrose site is built by Trp85, Asp86, and Ser164. Asp86 (nucleophile) is an active-site residue. Asp241 contacts Ca(2+). Sucrose is bound by residues Arg246 and Asp247. Residues Gln272, Leu308, Asn310, and Asp339 each contribute to the Ca(2+) site. Glu340 is a binding site for sucrose. Catalysis depends on Glu342, which acts as the Proton donor/acceptor. Arg360 contacts sucrose.

Belongs to the glycosyl hydrolase 68 family.

It localises to the secreted. It carries out the reaction [6)-beta-D-fructofuranosyl-(2-&gt;](n) alpha-D-glucopyranoside + sucrose = [6)-beta-D-fructofuranosyl-(2-&gt;](n+1) alpha-D-glucopyranoside + D-glucose. Ca(2+) may play an important structural role and promote stability of levansucrase. In terms of biological role, catalyzes the synthesis of levan, a fructose polymer, by transferring the fructosyl moiety from sucrose to a growing acceptor molecule. Also displays sucrose hydrolase activity. In Bacillus amyloliquefaciens (Bacillus velezensis), this protein is Levansucrase.